A 389-amino-acid polypeptide reads, in one-letter code: Chalcone synthase 2 (389 aa).

Residue Cys164 is part of the active site.

This sequence belongs to the thiolase-like superfamily. Chalcone/stilbene synthases family.

It catalyses the reaction (E)-4-coumaroyl-CoA + 3 malonyl-CoA + 3 H(+) = 2',4,4',6'-tetrahydroxychalcone + 3 CO2 + 4 CoA. The protein operates within secondary metabolite biosynthesis; flavonoid biosynthesis. The primary product of this enzyme is 4,2',4',6'-tetrahydroxychalcone (also termed naringenin-chalcone or chalcone) which can under specific conditions spontaneously isomerize into naringenin. This is Chalcone synthase 2 (CHS2) from Pisum sativum (Garden pea).